The following is a 1127-amino-acid chain: MEVQVSQASLGFELTSVEKSLREWSRLSREVIAWLCPSSPNFILNFPPPPSASSVSMVQLFSSPFGYQSPSGHSEEEREGNMKSAKPQVNHSQHGESQRALSPLQSTLSSAASPSQAYETYIENGLICLKHKIRNIEKKKLKLEDYKDRLKSGEHLNPDQLEAVEKYEEVLHNLEFAKELQKTFSGLSLDLLKAQKKAQRREHMLKLEAEKKKLRTILQVQYVLQNLTQEHVQKDFKGGLNGAVYLPSKELDYLIKFSKLTCPERNESLSVEDQMEQSSLYFWDLLEGSEKAVVGTTYKHLKDLLSKLLNSGYFESIPVPKNAKEKEVPLEEEMLIQSEKKTQLSKTESVKESESLMEFAQPEIQPQEFLNRRYMTEVDYSNKQGEEQPWEADYARKPNLPKRWDMLTEPDGQEKKQESFKSWEASGKHQEVSKPAVSLEQRKQDTSKLRSTLPEEQKKQEISKSKPSPSQWKQDTPKSKAGYVQEEQKKQETPKLWPVQLQKEQDPKKQTPKSWTPSMQSEQNTTKSWTTPMCEEQDSKQPETPKSWENNVESQKHSLTSQSQISPKSWGVATASLIPNDQLLPRKLNTEPKDVPKPVHQPVGSSSTLPKDPVLRKEKLQDLMTQIQGTCNFMQESVLDFDKPSSAIPTSQPPSATPGSPVASKEQNLSSQSDFLQEPLQATSSPVTCSSNACLVTTDQASSGSETEFMTSETPEAAIPPGKQPSSLASPNPPMAKGSEQGFQSPPASSSSVTINTAPFQAMQTVFNVNAPLPPRKEQEIKESPYSPGYNQSFTTASTQTPPQCQLPSIHVEQTVHSQETAANYHPDGTIQVSNGSLAFYPAQTNVFPRPTQPFVNSRGSVRGCTRGGRLITNSYRSPGGYKGFDTYRGLPSISNGNYSQLQFQAREYSGAPYSQRDNFQQCYKRGGTSGGPRANSRAGWSDSSQVSSPERDNETFNSGDSGQGDSRSMTPVDVPVTNPAATILPVHVYPLPQQMRVAFSAARTSNLAPGTLDQPIVFDLLLNNLGETFDLQLGRFNCPVNGTYVFIFHMLKLAVNVPLYVNLMKNEEVLVSAYANDGAPDHETASNHAILQLFQGDQIWLRLHRGAIYGSSWKYSTFSGYLLYQD.

The segment at Y67 to L108 is disordered. Positions R99–L108 are enriched in polar residues. 2 coiled-coil regions span residues L129–L156 and A194–T216. 3 disordered regions span residues N382–V614, D642–V753, and Q922–V975. Composition is skewed to basic and acidic residues over residues K402–V432 and E440–K464. Composition is skewed to polar residues over residues P512–T531 and T544–P567. Over residues L588 to K597 the composition is skewed to basic and acidic residues. Polar residues-rich tracts occupy residues K665 to T714 and Q741 to V753. Phosphoserine occurs at positions 948 and 949. Over residues T956–M970 the composition is skewed to polar residues. The 135-residue stretch at P993–D1127 folds into the C1q domain. D1078 and E1084 together coordinate Ca(2+).

The protein belongs to the caprin family. Homotrimer; via C1q domain. Found in a complex with LRP6, CCNY and CDK14 during G2/M stage; CAPRIN2 functions as a scaffold for the complex by binding to CCNY via its N terminus and to CDK14 via its C terminus. Interacts with LRP5. Interacts with LRP6. Detected in all tissues tested with highest levels of expression in brain and spleen.

Its subcellular location is the cytoplasm. It localises to the mitochondrion. It is found in the cell membrane. Functionally, promotes phosphorylation of the Wnt coreceptor LRP6, leading to increased activity of the canonical Wnt signaling pathway. Facilitates constitutive LRP6 phosphorylation by CDK14/CCNY during G2/M stage of the cell cycle, which may potentiate cells for Wnt signaling. May regulate the transport and translation of mRNAs, modulating for instance the expression of proteins involved in synaptic plasticity in neurons. Involved in regulation of growth as erythroblasts shift from a highly proliferative state towards their terminal phase of differentiation. May be involved in apoptosis. This chain is Caprin-2, found in Homo sapiens (Human).